Consider the following 500-residue polypeptide: MALRAKADVWLARPWQCLPRTRALGTTAALAPNTLRPFEAIPQYSRNRWLKMLQILREEGQEGLHLEMHEAFRELGPIFRYSMGRTQVVSVMLPEDAEKLHQVESMHPRRMHLEPWVAHREHRGLSRGVFLLNGPEWRFNRLRLNPHVLSPKAVQKFVPMVDMVARDFLESLKKKVFQNARGSLTMDVQQSLFNYSIEASNFVLFGERLGLLGHDLSPASLTFIHALHSVFKTTPQLMFLPRSLTRWTSTRVWKEHFEAWDVISEYVNRCIRKVHQELRLGSPHTYSGIVAELMSQGALPLDAIRANSIELTAGSVDTTTFPLVMALFELARNPDVQQAVRQESLAAEASVAANPQRAMSDLPLLRAVLKETLRLYPVGGFLERILSSDLVLQNYHVPAGTLVLLYLYSMGRNPAVFPRPEHYLPQRWLERNGSFQHLTFGFGVRQCLGKRLAQVEMLLLLHHVLKSFRVETQEREDVRMVYRFVLAPSSSPLLTFRPVS.

The N-terminal 24 residues, 1–24 (MALRAKADVWLARPWQCLPRTRAL), are a transit peptide targeting the mitochondrion. Phe-381 is a binding site for 21-hydroxyprogesterone. Cys-447 lines the heme pocket.

This sequence belongs to the cytochrome P450 family. Heme serves as cofactor. In terms of tissue distribution, adrenal gland.

The protein resides in the mitochondrion inner membrane. The catalysed reaction is a steroid + 2 reduced [adrenodoxin] + O2 + 2 H(+) = an 11beta-hydroxysteroid + 2 oxidized [adrenodoxin] + H2O. It catalyses the reaction 21-hydroxyprogesterone + 2 reduced [adrenodoxin] + O2 + 2 H(+) = corticosterone + 2 oxidized [adrenodoxin] + H2O. The enzyme catalyses corticosterone + 2 reduced [adrenodoxin] + O2 + 2 H(+) = 18-hydroxycorticosterone + 2 oxidized [adrenodoxin] + H2O. It carries out the reaction 18-hydroxycorticosterone + 2 reduced [adrenodoxin] + O2 + 2 H(+) = aldosterone + 2 oxidized [adrenodoxin] + 2 H2O. The catalysed reaction is 11-deoxycortisol + 2 reduced [adrenodoxin] + O2 + 2 H(+) = cortisol + 2 oxidized [adrenodoxin] + H2O. It catalyses the reaction 21-hydroxyprogesterone + 2 reduced [adrenodoxin] + O2 + 2 H(+) = 18-hydroxy-11-deoxycorticosterone + 2 oxidized [adrenodoxin] + H2O. The enzyme catalyses cortisol + 2 reduced [adrenodoxin] + O2 + 2 H(+) = 18-hydroxycortisol + 2 oxidized [adrenodoxin] + H2O. It carries out the reaction 18-hydroxycortisol + 2 reduced [adrenodoxin] + O2 + 2 H(+) = 18-oxocortisol + 2 oxidized [adrenodoxin] + 2 H2O. Its pathway is steroid biosynthesis. Functionally, a cytochrome P450 monooxygenase that catalyzes the biosynthesis of aldosterone, the main mineralocorticoid in the human body responsible for salt and water homeostasis, thus involved in blood pressure regulation, arterial hypertension, and the development of heart failure. Catalyzes three sequential oxidative reactions of 11-deoxycorticosterone (21-hydroxyprogesterone), namely 11-beta hydroxylation, followed by two successive oxidations at C18 yielding 18-hydroxy and then 18-oxo intermediates (that would not leave the enzyme active site during the consecutive hydroxylation reactions), ending with the formation of aldosterone. Can also produce 18-hydroxycortisol and 18-oxocortisol, derived from successive oxidations of cortisol at C18, normally found at very low levels, but significantly increased in primary aldosteronism, the most common form of secondary hypertension. Mechanistically, uses molecular oxygen inserting one oxygen atom into a substrate and reducing the second into a water molecule. Two electrons are provided by NADPH via a two-protein mitochondrial transfer system comprising flavoprotein FDXR (adrenodoxin/ferredoxin reductase) and nonheme iron-sulfur protein FDX1 or FDX2 (adrenodoxin/ferredoxin). Could also be involved in the androgen metabolic pathway. In Mesocricetus auratus (Golden hamster), this protein is Cytochrome P450 11B2, mitochondrial (CYP11B2).